The following is a 296-amino-acid chain: Cobalamin trafficking protein CblD (296 aa).

The N-terminal 38 residues, M1–G38, are a transit peptide targeting the mitochondrion. Position 203 is an N6-acetyllysine (K203).

Heterodimer with MMACHC. Forms a multiprotein complex with MMACHC, MTR and MTRR. Widely expressed at high levels.

The protein resides in the cytoplasm. Its subcellular location is the mitochondrion. Functionally, involved in cobalamin metabolism and trafficking. Plays a role in regulating the biosynthesis and the proportion of two coenzymes, methylcob(III)alamin (MeCbl) and 5'-deoxyadenosylcobalamin (AdoCbl). Promotes oxidation of cob(II)alamin bound to MMACHC. The processing of cobalamin in the cytosol occurs in a multiprotein complex composed of at least MMACHC, MMADHC, MTRR (methionine synthase reductase) and MTR (methionine synthase) which may contribute to shuttle safely and efficiently cobalamin towards MTR in order to produce methionine. The sequence is that of Cobalamin trafficking protein CblD from Homo sapiens (Human).